The following is a 209-amino-acid chain: Glycolipid transfer protein A (209 aa).

A run of 2 repeats spans residues 45–55 and 56–66. Residues 45–66 are 2 X 12 AA approximate tandem repeats; sequence IKADITGNITKIRSVYESNPTK. 48–55 is a beta-D-galactosyl-(1-&gt;4)-beta-D-glucosyl-(1&lt;-&gt;1)-N-[(9Z)-octadecenoyl]-sphing-4-enine binding site; it reads DITGNITK. Beta-D-galactosyl-(1-&gt;4)-beta-D-glucosyl-(1&lt;-&gt;1)-N-[(9Z)-octadecenoyl]-sphing-4-enine-binding residues include H140 and Y207.

It belongs to the GLTP family.

The protein resides in the cytoplasm. Functionally, accelerates the intermembrane transfer of various glycolipids. Catalyzes the transfer of various glycosphingolipids between membranes but does not catalyze the transfer of phospholipids. May be involved in the intracellular translocation of glucosylceramides. The polypeptide is Glycolipid transfer protein A (gltp-a) (Xenopus laevis (African clawed frog)).